The sequence spans 557 residues: MRSDMIKKGFDKAPHRSLLKATGLKDEDFDKPFIAICNSFIEIIPGHKHLNEFGKLVKEAVRAAGMVPFEFNTIGVDDGIAMGHIGMRYSLPSREIIADSVETVVNAHWFDGMICIPNCDKITPGMMMAALRINIPTVFVSGGPMAAGKTSKGDVVDLSSVFEGVGAYQSGKISEEELKDIEDHGCPSCGSCSGMFTANSMNCLCEVLGLALPGNGSILAIDPRREELIKQAAEKLKILIERDIKPRDIVTEEAIDDAFALDMAMGGSTNTVLHTLALAQEAGLDYDMNRIDAVSRRVPHLCKVSPASNWHMEDIDRAGGISAILKEMSRKEGVLHLDRITATGQTLRENIAHAEIKDKEVIHSLENPHSEEGGLRILKGNLAKDGAVIKSGATEVIRFEGPCVIFNSQDEALAGIMLGKVKKGDVVIIRYEGPRGGPGMPEMLAPTSAIAGMGLGADVALLTDGRFSGASRGISVGHISPEAAAGGTIALLEQGDIVCIDVEERLLEVRVSDEELDKRKKEWKRPEPKVKTGWLGRYAQMVTSANTGAVLKIPNFD.

Asp-78 lines the Mg(2+) pocket. Position 119 (Cys-119) interacts with [2Fe-2S] cluster. Mg(2+)-binding residues include Asp-120 and Lys-121. Lys-121 is subject to N6-carboxylysine. A [2Fe-2S] cluster-binding site is contributed by Cys-192. Glu-442 contributes to the Mg(2+) binding site. Catalysis depends on Ser-468, which acts as the Proton acceptor.

This sequence belongs to the IlvD/Edd family. Homodimer. The cofactor is [2Fe-2S] cluster. Mg(2+) serves as cofactor.

It carries out the reaction (2R)-2,3-dihydroxy-3-methylbutanoate = 3-methyl-2-oxobutanoate + H2O. The catalysed reaction is (2R,3R)-2,3-dihydroxy-3-methylpentanoate = (S)-3-methyl-2-oxopentanoate + H2O. It functions in the pathway amino-acid biosynthesis; L-isoleucine biosynthesis; L-isoleucine from 2-oxobutanoate: step 3/4. It participates in amino-acid biosynthesis; L-valine biosynthesis; L-valine from pyruvate: step 3/4. Its function is as follows. Functions in the biosynthesis of branched-chain amino acids. Catalyzes the dehydration of (2R,3R)-2,3-dihydroxy-3-methylpentanoate (2,3-dihydroxy-3-methylvalerate) into 2-oxo-3-methylpentanoate (2-oxo-3-methylvalerate) and of (2R)-2,3-dihydroxy-3-methylbutanoate (2,3-dihydroxyisovalerate) into 2-oxo-3-methylbutanoate (2-oxoisovalerate), the penultimate precursor to L-isoleucine and L-valine, respectively. The sequence is that of Dihydroxy-acid dehydratase from Bacillus cereus (strain AH820).